A 238-amino-acid polypeptide reads, in one-letter code: Dolichyldiphosphatase 1 (238 aa).

Helical transmembrane passes span 33 to 53, 100 to 120, 130 to 150, and 162 to 182; these read LAYL…LIIF, PSSH…FLYL, FLDL…AFLV, and WSQV…WFIF.

This sequence belongs to the dolichyldiphosphatase family.

Its subcellular location is the endoplasmic reticulum membrane. The enzyme catalyses a di-trans,poly-cis-dolichyl diphosphate + H2O = a di-trans,poly-cis-dolichyl phosphate + phosphate + H(+). The protein operates within protein modification; protein glycosylation. Functionally, required for efficient N-glycosylation. Necessary for maintaining optimal levels of dolichol-linked oligosaccharides. Hydrolyzes dolichyl pyrophosphate at a very high rate and dolichyl monophosphate at a much lower rate. Does not act on phosphatidate. The sequence is that of Dolichyldiphosphatase 1 (DOLPP1) from Plecturocebus moloch (Dusky titi monkey).